Here is a 180-residue protein sequence, read N- to C-terminus: Glycoprotein Xg (180 aa).

An N-terminal signal peptide occupies residues 1-21 (MESWWGLPCLAFLCFLMHARG). The Extracellular segment spans residues 22–142 (QRDFDLADAL…GNPEGNMVAK (121 aa)). The segment at 28–133 (ADALDDPEPT…HGGDHHSTYG (106 aa)) is disordered. Positions 47–57 (KPKPPYYPQPE) are enriched in pro residues. A helical transmembrane segment spans residues 143–163 (IVSPIVSVVVVTLLGAAASYF). Residues 164–180 (KLNNRRNCFRTHEPENV) lie on the Cytoplasmic side of the membrane.

Belongs to the CD99 family. O-glycosylated. Expressed in erythroid tissues, including thymus, bone marrow and fetal liver, and in several nonerythroid tissues, such as heart, placenta, skeletal muscle, thyroid and trachea, as well as in skin fibroblasts. Expression is low or undetectable in other tissues.

It is found in the cell membrane. The chain is Glycoprotein Xg (XG) from Homo sapiens (Human).